The chain runs to 252 residues: Imidazole glycerol phosphate synthase subunit HisF (252 aa).

Residues Asp-11 and Asp-130 contribute to the active site.

This sequence belongs to the HisA/HisF family. Heterodimer of HisH and HisF.

It localises to the cytoplasm. The enzyme catalyses 5-[(5-phospho-1-deoxy-D-ribulos-1-ylimino)methylamino]-1-(5-phospho-beta-D-ribosyl)imidazole-4-carboxamide + L-glutamine = D-erythro-1-(imidazol-4-yl)glycerol 3-phosphate + 5-amino-1-(5-phospho-beta-D-ribosyl)imidazole-4-carboxamide + L-glutamate + H(+). It functions in the pathway amino-acid biosynthesis; L-histidine biosynthesis; L-histidine from 5-phospho-alpha-D-ribose 1-diphosphate: step 5/9. In terms of biological role, IGPS catalyzes the conversion of PRFAR and glutamine to IGP, AICAR and glutamate. The HisF subunit catalyzes the cyclization activity that produces IGP and AICAR from PRFAR using the ammonia provided by the HisH subunit. The protein is Imidazole glycerol phosphate synthase subunit HisF of Desulforudis audaxviator (strain MP104C).